Reading from the N-terminus, the 281-residue chain is Ribosomal RNA small subunit methyltransferase A (281 aa).

Residues Asn36, Leu38, Gly63, Glu84, Asp109, and Asn127 each coordinate S-adenosyl-L-methionine.

Belongs to the class I-like SAM-binding methyltransferase superfamily. rRNA adenine N(6)-methyltransferase family. RsmA subfamily.

Its subcellular location is the cytoplasm. The catalysed reaction is adenosine(1518)/adenosine(1519) in 16S rRNA + 4 S-adenosyl-L-methionine = N(6)-dimethyladenosine(1518)/N(6)-dimethyladenosine(1519) in 16S rRNA + 4 S-adenosyl-L-homocysteine + 4 H(+). Specifically dimethylates two adjacent adenosines (A1518 and A1519) in the loop of a conserved hairpin near the 3'-end of 16S rRNA in the 30S particle. May play a critical role in biogenesis of 30S subunits. The chain is Ribosomal RNA small subunit methyltransferase A from Borreliella burgdorferi (strain ATCC 35210 / DSM 4680 / CIP 102532 / B31) (Borrelia burgdorferi).